A 282-amino-acid polypeptide reads, in one-letter code: Protein N-terminal and lysine N-methyltransferase efm7 (282 aa).

Positions 1 to 13 (MSKPEEVVNHVPE) are enriched in basic and acidic residues. Residues 1-32 (MSKPEEVVNHVPEDEGSDIEAGGLFEDPPDFY) are disordered. S-adenosyl-L-methionine contacts are provided by residues W67, 93–95 (GAA), D115, W152, and A179.

It belongs to the class I-like SAM-binding methyltransferase superfamily. EFM7 family.

Its subcellular location is the cytoplasm. Functionally, S-adenosyl-L-methionine-dependent protein methyltransferase that trimethylates the N-terminal glycine 'Gly-2' of elongation factor 1-alpha, before also catalyzing the mono- and dimethylation of 'Lys-3'. In Neurospora crassa (strain ATCC 24698 / 74-OR23-1A / CBS 708.71 / DSM 1257 / FGSC 987), this protein is Protein N-terminal and lysine N-methyltransferase efm7 (nnt-1).